We begin with the raw amino-acid sequence, 53 residues long: Sec-independent protein translocase protein TatA (53 aa).

The chain crosses the membrane as a helical span at residues 1–21 (MGMSFSHLLIVLLIIFVLFGA).

Belongs to the TatA/E family. The Tat system comprises two distinct complexes: a TatABC complex, containing multiple copies of TatA, TatB and TatC subunits, and a separate TatA complex, containing only TatA subunits. Substrates initially bind to the TatABC complex, which probably triggers association of the separate TatA complex to form the active translocon.

It is found in the cell inner membrane. Its function is as follows. Part of the twin-arginine translocation (Tat) system that transports large folded proteins containing a characteristic twin-arginine motif in their signal peptide across membranes. TatA could form the protein-conducting channel of the Tat system. The protein is Sec-independent protein translocase protein TatA of Rickettsia africae (strain ESF-5).